Reading from the N-terminus, the 786-residue chain is Digalactosyldiacylglycerol synthase 1, chloroplastic (786 aa).

A chloroplast-targeting transit peptide spans 1-25; the sequence is MASQRQPPSSSNAFSFLSKGWREVR.

This sequence belongs to the glycosyltransferase group 1 family. Glycosyltransferase 4 subfamily. As to expression, high expression in nodules infected cells, but low in nodule inner cortex and root central cylinder.

The protein localises to the plastid. It localises to the chloroplast outer membrane. It is found in the plastid outer membrane. The enzyme catalyses a 1,2-diacyl-3-O-(beta-D-galactosyl)-sn-glycerol + UDP-alpha-D-galactose = a 1,2-diacyl-3-O-[alpha-D-galactosyl-(1-&gt;6)-beta-D-galactosyl]-sn-glycerol + UDP + H(+). Its function is as follows. Involved in the synthesis of diacylglycerol galactolipids that are specifically found in thylakoid and in nodule peribacteroid membranes. Specific for alpha-glycosidic linkages. This is Digalactosyldiacylglycerol synthase 1, chloroplastic from Lotus japonicus (Lotus corniculatus var. japonicus).